The primary structure comprises 878 residues: Phosphoenolpyruvate carboxylase (878 aa).

Residues His140 and Lys545 contribute to the active site.

It belongs to the PEPCase type 1 family. Mg(2+) serves as cofactor.

It carries out the reaction oxaloacetate + phosphate = phosphoenolpyruvate + hydrogencarbonate. Functionally, forms oxaloacetate, a four-carbon dicarboxylic acid source for the tricarboxylic acid cycle. This Ectopseudomonas mendocina (strain ymp) (Pseudomonas mendocina) protein is Phosphoenolpyruvate carboxylase.